The chain runs to 298 residues: Small ribosomal subunit protein uS2 (298 aa).

It belongs to the universal ribosomal protein uS2 family.

The polypeptide is Small ribosomal subunit protein uS2 (Leifsonia xyli subsp. xyli (strain CTCB07)).